The primary structure comprises 1444 residues: Rho GTPase-activating protein 31 (1444 aa).

Residues 21-216 enclose the Rho-GAP domain; that stretch reads CDLTEYLESS…FILNHVDQIF (196 aa). Serine 272 is modified (phosphoserine). A Phosphothreonine modification is found at threonine 286. A phosphoserine mark is found at serine 346, serine 349, and serine 387. Positions 398-427 are disordered; sequence WGQEGMPPGAEGGFDVSSDRSHLQGAQARP. Serine 476 is modified (phosphoserine). Residues 504 to 631 form a disordered region; it reads TNSTPCRTPP…ESSTLQESPR (128 aa). Residues 515-534 show a composition bias toward low complexity; it reads ELQSLSSLEEFSFHGSESGG. The segment covering 600–619 has biased composition (basic and acidic residues); the sequence is NELEKRPNPEKVVEEGREAG. Threonine 679 carries the phosphothreonine modification. Disordered stretches follow at residues 688 to 893 and 906 to 1108; these read SSLG…EDDT and EPWE…SSLN. 2 positions are modified to phosphoserine: serine 701 and serine 712. A compositionally biased stretch (polar residues) spans 722-734; the sequence is PANQSTQGASTAA. Positions 735–745 are enriched in basic and acidic residues; sequence SREKPEPEQGL. Pro residues predominate over residues 777–790; sequence LSPPLPPAPPPPTP. Serine 778 carries the phosphoserine modification. Threonine 789 is subject to Phosphothreonine. Over residues 803–817 the composition is skewed to basic and acidic residues; it reads GPEREDSSRKLRTDL. A compositionally biased stretch (polar residues) spans 822 to 834; that stretch reads LKSQDSPEISSLC. Positions 839–848 are enriched in basic and acidic residues; the sequence is ATPRHSDKQN. Polar residues predominate over residues 960-977; it reads TVKSQWTLEVPSSSSCAN. Serine 974 is subject to Phosphoserine. Residues 992 to 1008 are compositionally biased toward basic and acidic residues; sequence PRREITGWDEKALRSFR. Residues 1028 to 1038 are compositionally biased toward polar residues; it reads VQPNPAETSPI. Low complexity predominate over residues 1064–1075; the sequence is GPESSKESSPSV. Residues serine 1105, serine 1106, and serine 1178 each carry the phosphoserine modification. 2 stretches are compositionally biased toward polar residues: residues 1211 to 1224 and 1234 to 1245; these read QIPQ…SGEN and EGPSSTSGTTQK. The disordered stretch occupies residues 1211–1346; sequence QIPQPLPSQS…HRSRPGRPQS (136 aa). The span at 1246–1265 shows a compositional bias: basic and acidic residues; that stretch reads PAKDDSPSSLESSKEEKPKQ. 2 stretches are compositionally biased toward polar residues: residues 1292–1303 and 1314–1323; these read PGSSNLLSTQDA and TEPSGDNLLS.

In terms of assembly, interacts with ITSN1, which inhibits GAP activity. Interacts with PARVA. Interacts with GTP-loaded RHOU. Phosphorylation on Thr-789 reduces GAP activity.

It is found in the cell projection. The protein resides in the lamellipodium. It localises to the cell junction. Its subcellular location is the focal adhesion. In terms of biological role, functions as a GTPase-activating protein (GAP) for RAC1 and CDC42. Required for cell spreading, polarized lamellipodia formation and cell migration. The polypeptide is Rho GTPase-activating protein 31 (ARHGAP31) (Homo sapiens (Human)).